The sequence spans 953 residues: Nucleotide-binding oligomerization domain-containing protein 1 (953 aa).

One can recognise a CARD domain in the interval 15 to 105 (ESHPHIQLLK…AYVDLRPWLL (91 aa)). The NACHT domain occupies 196-531 (ETIFILGDAG…AFFTAFFLVL (336 aa)). 202 to 209 (GDAGVGKS) serves as a coordination point for ATP. S-palmitoyl cysteine attachment occurs at residues Cys-558 and Cys-567. LRR repeat units lie at residues 632–656 (LKSL…IWML), 702–725 (FPKR…ELQP), 727–750 (FSRL…VLSE), 755–778 (YKIV…YVTK), 783–806 (CKGL…YLAL), 839–862 (HPSL…SLAR), 867–891 (NTSL…LAEM), 895–918 (NQTL…QLAD), and 923–946 (NTGI…VYED). Cys-952 carries the S-palmitoyl cysteine lipid modification.

Belongs to the NOD1-NOD2 family. In terms of assembly, homooligomer: homooligomerizes following ligand-binding, promoting RIPK2 recruitment. Interacts (via CARD domain) with RIPK2 (via CARD domain). Following RIPK2 recruitment, RIPK2 homooligomerizes via its CARD domain and forms long filaments named RIPosomes. Interacts with ARHGEF2. Interacts (via CARD domain) with ubiquitin; inhibiting interaction with RIPK2. Interacts with NLRP10 and recruits it to the cell membrane following invasive bacterial infection. Interacts with IFIH1; this interaction promotes transcription of antiviral genes and inhibition of viral replication. Interacts with IRGM; promoting NOD1 degradation. Interacts with ATG16L1. Post-translationally, palmitoylated. Palmitoylation is required for proper recruitment to the bacterial entry site and hence for proper signaling upon cognate peptidoglycan detection. Ubiquitinated. 'Lys-48'-linked polyubiquitination by RNF34 promotes proteasomal degradation and thereby negatively regulates NOD1 for instance in NF-kappa-B activation. In terms of processing, degraded via selective autophagy following interaction with IRGM. IRGM promotes NOD1-RIPK2 RIPosome recruitment to autophagosome membranes, promoting their SQSTM1/p62-dependent autophagic degradation. Highly expressed in adult heart, skeletal muscle, pancreas, spleen and ovary. Also detected in placenta, lung, liver, kidney, thymus, testis, small intestine and colon.

It localises to the cell membrane. Its subcellular location is the apical cell membrane. The protein resides in the basolateral cell membrane. It is found in the cytoplasm. Its function is as follows. Pattern recognition receptor (PRR) that detects bacterial peptidoglycan fragments and other danger signals and thus participates in both innate and adaptive immune responses. Specifically recognizes and binds gamma-D-glutamyl-meso-diaminopimelic acid (iE-DAP), a dipeptide present in peptidoglycan of Gram-negative bacteria. Preferentially binds iE-DAP in tripeptide-containing muropeptides (MurNAc-TriDAP or TriDAP). Ligand binding triggers oligomerization that facilitates the binding and subsequent activation of the proximal adapter receptor-interacting RIPK2. Following recruitment, RIPK2 undergoes 'Met-1'- (linear) and 'Lys-63'-linked polyubiquitination by E3 ubiquitin-protein ligases XIAP, BIRC2, BIRC3 and the LUBAC complex, becoming a scaffolding protein for downstream effectors, triggering activation of the NF-kappa-B and MAP kinases signaling. This in turn leads to the transcriptional activation of hundreds of genes involved in immune response. Also acts as a regulator of antiviral response elicited by dsRNA and the expression of RLR pathway members by targeting IFIH1 and TRAF3 to modulate the formation of IFIH1-MAVS and TRAF3-MAVS complexes leading to increased transcription of type I IFNs. Also acts as a regulator of autophagy via its interaction with ATG16L1, possibly by recruiting ATG16L1 at the site of bacterial entry. Besides recognizing pathogens, also involved in the endoplasmic reticulum stress response: acts by sensing and binding to the cytosolic metabolite sphingosine-1-phosphate generated in response to endoplasmic reticulum stress, initiating an inflammation process that leads to activation of the NF-kappa-B and MAP kinases signaling. In addition, plays a role in insulin trafficking in beta cells in a cell-autonomous manner. Mechanistically, upon recognizing cognate ligands, NOD1 and RIPK2 localize to insulin vesicles where they recruit RAB1A to direct insulin trafficking through the cytoplasm. In contrast to isoform 1, does not efficiently recognize and bind gamma-D-glutamyl-meso-diaminopimelic acid (iE-DAP) ligand. The protein is Nucleotide-binding oligomerization domain-containing protein 1 of Homo sapiens (Human).